The sequence spans 158 residues: Large ribosomal subunit protein uL15 (158 aa).

Residues 1-13 are compositionally biased toward basic and acidic residues; the sequence is MKLNEIKDNEGST. A disordered region spans residues 1 to 44; sequence MKLNEIKDNEGSTHSRKRLGRGIGSGSGKTAGRGVKGQKSRSGV. Over residues 21–35 the composition is skewed to gly residues; it reads RGIGSGSGKTAGRGV.

Belongs to the universal ribosomal protein uL15 family. In terms of assembly, part of the 50S ribosomal subunit.

Binds to the 23S rRNA. The polypeptide is Large ribosomal subunit protein uL15 (Rhizobium etli (strain ATCC 51251 / DSM 11541 / JCM 21823 / NBRC 15573 / CFN 42)).